Consider the following 104-residue polypeptide: Small ribosomal subunit protein uS10 (104 aa).

Belongs to the universal ribosomal protein uS10 family. In terms of assembly, part of the 30S ribosomal subunit.

Functionally, involved in the binding of tRNA to the ribosomes. The polypeptide is Small ribosomal subunit protein uS10 (Buchnera aphidicola subsp. Baizongia pistaciae (strain Bp)).